A 243-amino-acid chain; its full sequence is Small ribosomal subunit protein uS3 (243 aa).

A2 carries the post-translational modification N-acetylalanine. Phosphoserine; by PKC/PRKCD is present on S6. Residues 21-92 enclose the KH type-2 domain; it reads LNEFLTRELA…SVELYAEKVA (72 aa). S35 is modified (phosphoserine). T42 is modified (phosphothreonine; by MAPK). An N6-acetyllysine modification is found at K62. 3 positions are modified to asymmetric dimethylarginine; by PRMT1: R64, R65, and R67. T70 is subject to Phosphothreonine; by PKB. Residue K90 forms a Glycyl lysine isopeptide (Lys-Gly) (interchain with G-Cter in ubiquitin) linkage. S104 bears the Phosphoserine mark. An N6-succinyllysine modification is found at K132. K202 is covalently cross-linked (Glycyl lysine isopeptide (Lys-Gly) (interchain with G-Cter in ubiquitin)). S209 is modified (phosphoserine; by IKKB). Residue K214 forms a Glycyl lysine isopeptide (Lys-Gly) (interchain with G-Cter in SUMO2); alternate linkage. Residue K214 forms a Glycyl lysine isopeptide (Lys-Gly) (interchain with G-Cter in ubiquitin); alternate linkage. Residues 214–243 form a disordered region; sequence KDEILPTTPISEQKGGKPEPPAMPQPVPTA. T220 carries the phosphothreonine modification. Phosphothreonine; by CDK1 and PKC/PRKCD is present on T221. S224 carries the post-translational modification Phosphoserine. K230 participates in a covalent cross-link: Glycyl lysine isopeptide (Lys-Gly) (interchain with G-Cter in SUMO2). A compositionally biased stretch (pro residues) spans 231–243; that stretch reads PEPPAMPQPVPTA. T242 bears the Phosphothreonine mark.

It belongs to the universal ribosomal protein uS3 family. As to quaternary structure, component of the 40S small ribosomal subunit. Identified in a IGF2BP1-dependent mRNP granule complex containing untranslated mRNAs. Interacts with HNRPD. Interacts with PRMT1; the interaction methylates RPS3. Interacts with SUMO1; the interaction sumoylates RPS3. Interacts with UBC9. Interacts with CDK1; the interaction phosphorylates RPS3. Interacts with PRKCD; the interaction phosphorylates RPS3. Interacts with PKB/AKT; the interaction phosphorylates RPS3. Interacts with E2F1; the interaction occurs in the absence of nerve growth factor and increases transcription of pro-apoptotic proteins BCL2L11/BIM and HRK/Dp5. Interacts with the base excision repair proteins APEX1 and OGG1; interaction with OGG1 increases OGG1 N-glycosylase activity. Interacts with UNG; the interaction increases the uracil excision activity of UNG1. Interacts with HSP90; the interaction prevents the ubiquitination and proteasome-dependent degradation of RPS3 and is suppressed by increased ROS levels. Interacts with TOM70; the interaction promotes translocation of RPS3 to the mitochondrion. Interacts (via N-terminus) with RELA (via N-terminus); the interaction enhances the DNA-binding activity of the NF-kappa-B p65-p50 complex. Interacts with NFKBIA; the interaction is direct and may bridge the interaction between RPS3 and RELA. Interacts with IKKB; the interaction phosphorylates RPS3 and enhances its translocation to the nucleus. Interacts (via KH domain) with MDM2 and TP53. Interacts with TRADD. Interacts with CRY1. In terms of processing, methylation by PRMT1 is required for import into the nucleolus and for ribosome assembly. Post-translationally, sumoylation by SUMO1 enhances protein stability through increased resistance to proteolysis. Sumoylation occurs at one or more of the three consensus sites, Lys-18, Lys-214 and Lys-230. Phosphorylation at Thr-221 by CDK1 occurs mainly in G2/M phase. Phosphorylation by PRKCD occurs on a non-ribosomal-associated form which results in translocation of RPS3 to the nucleus and enhances its endonuclease activity. Phosphorylated on Ser-209 by IKKB in response to activation of the NF-kappa-B p65-p50 complex which enhances the association of RPS3 with importin-alpha and mediates the nuclear translocation of RPS3. Phosphorylation by MAPK is required for translocation to the nucleus following exposure of cells to DNA damaging agents such as hydrogen peroxide. Phosphorylation by PKB/AKT mediates RPS3 nuclear translocation, enhances RPS3 endonuclease activity and suppresses RPS3-induced neuronal apoptosis. In terms of processing, ubiquitinated; ubiquitination is prevented by interaction with HSP90 which stabilizes the protein. Monoubiquitinated at Lys-214 by RNF10 and ZNF598 when a ribosome has stalled during translation of poly(A) sequences, leading to preclude synthesis of a long poly-lysine tail and initiate the ribosome quality control (RQC) pathway to degrade the potentially detrimental aberrant nascent polypeptide. Deubiquitinated at Lys-214 by USP10, preventing degradation by the proteasome and promoting 40S ribosome subunit recycling following ribosome dissociation. Post-translationally, ufmylated by UFL1.

The protein resides in the cytoplasm. It is found in the nucleus. It localises to the nucleolus. The protein localises to the mitochondrion inner membrane. Its subcellular location is the cytoskeleton. The protein resides in the spindle. The catalysed reaction is 2'-deoxyribonucleotide-(2'-deoxyribose 5'-phosphate)-2'-deoxyribonucleotide-DNA = a 3'-end 2'-deoxyribonucleotide-(2,3-dehydro-2,3-deoxyribose 5'-phosphate)-DNA + a 5'-end 5'-phospho-2'-deoxyribonucleoside-DNA + H(+). In terms of biological role, component of the small ribosomal subunit. The ribosome is a large ribonucleoprotein complex responsible for the synthesis of proteins in the cell. Has endonuclease activity and plays a role in repair of damaged DNA. Cleaves phosphodiester bonds of DNAs containing altered bases with broad specificity and cleaves supercoiled DNA more efficiently than relaxed DNA. Displays high binding affinity for 7,8-dihydro-8-oxoguanine (8-oxoG), a common DNA lesion caused by reactive oxygen species (ROS). Has also been shown to bind with similar affinity to intact and damaged DNA. Stimulates the N-glycosylase activity of the base excision protein OGG1. Enhances the uracil excision activity of UNG1. Also stimulates the cleavage of the phosphodiester backbone by APEX1. When located in the mitochondrion, reduces cellular ROS levels and mitochondrial DNA damage. Has also been shown to negatively regulate DNA repair in cells exposed to hydrogen peroxide. Plays a role in regulating transcription as part of the NF-kappa-B p65-p50 complex where it binds to the RELA/p65 subunit, enhances binding of the complex to DNA and promotes transcription of target genes. Represses its own translation by binding to its cognate mRNA. Binds to and protects TP53/p53 from MDM2-mediated ubiquitination. Involved in spindle formation and chromosome movement during mitosis by regulating microtubule polymerization. Involved in induction of apoptosis through its role in activation of CASP8. Induces neuronal apoptosis by interacting with the E2F1 transcription factor and acting synergistically with it to up-regulate pro-apoptotic proteins BCL2L11/BIM and HRK/Dp5. Interacts with TRADD following exposure to UV radiation and induces apoptosis by caspase-dependent JNK activation. This Bos taurus (Bovine) protein is Small ribosomal subunit protein uS3 (RPS3).